A 472-amino-acid chain; its full sequence is Ribosomal protein uS12 methylthiotransferase RimO (472 aa).

The 111-residue stretch at 33–143 folds into the MTTase N-terminal domain; sequence NRIGFVSLGC…VLKHVHKYVP (111 aa). Residues cysteine 42, cysteine 78, cysteine 107, cysteine 175, cysteine 179, and cysteine 182 each coordinate [4Fe-4S] cluster. The region spanning 161 to 398 is the Radical SAM core domain; sequence LTPKHYAYLK…MELQAEISAE (238 aa). In terms of domain architecture, TRAM spans 401–467; that stretch reads ARFVGRTLDI…EHDLWAEVVD (67 aa).

It belongs to the methylthiotransferase family. RimO subfamily. It depends on [4Fe-4S] cluster as a cofactor.

It localises to the cytoplasm. The enzyme catalyses L-aspartate(89)-[ribosomal protein uS12]-hydrogen + (sulfur carrier)-SH + AH2 + 2 S-adenosyl-L-methionine = 3-methylsulfanyl-L-aspartate(89)-[ribosomal protein uS12]-hydrogen + (sulfur carrier)-H + 5'-deoxyadenosine + L-methionine + A + S-adenosyl-L-homocysteine + 2 H(+). Functionally, catalyzes the methylthiolation of an aspartic acid residue of ribosomal protein uS12. The polypeptide is Ribosomal protein uS12 methylthiotransferase RimO (Shewanella sp. (strain W3-18-1)).